A 34-amino-acid chain; its full sequence is Cycloamanide E proprotein (34 aa).

The propeptide occupies 1 to 10 (MSDINAARLP). Positions 11-17 (SFFFPVP) form a cross-link, cyclopeptide (Ser-Pro). The propeptide occupies 18 to 34 (CISDDIEMVLTRGESLC).

The protein belongs to the MSDIN fungal toxin family. In terms of processing, processed by the macrocyclase-peptidase enzyme POPB to yield a cyclic decapeptide. POPB first removes 10 residues from the N-terminus. Conformational trapping of the remaining peptide forces the enzyme to release this intermediate rather than proceed to macrocyclization. The enzyme rebinds the remaining peptide in a different conformation and catalyzes macrocyclization of the N-terminal 7 residues.

Its function is as follows. Cyclic heptapeptide that belongs to the MSDIN-like toxin family responsible for a large number of food poisoning cases and deaths. Cycloaminide E is structurally related to other cycloamanides that are non-toxic to mammals but show immunosuppressive activity. This is Cycloamanide E proprotein from Amanita phalloides (Death cap).